The sequence spans 758 residues: Protein hunchback (758 aa).

Disordered stretches follow at residues glutamate 30 to serine 51 and glutamate 172 to lysine 214. The span at serine 39–serine 51 shows a compositional bias: polar residues. Threonine 178 carries the post-translational modification Phosphothreonine. Phosphoserine occurs at positions 188, 207, 209, and 210. Positions glutamate 198 to lysine 214 are enriched in basic and acidic residues. C2H2-type zinc fingers lie at residues tyrosine 240–histidine 262, leucine 269–histidine 291, phenylalanine 297–histidine 319, and tyrosine 325–histidine 349. 2 disordered regions span residues leucine 365 to threonine 416 and glutamine 513 to lysine 536. 2 stretches are compositionally biased toward low complexity: residues valine 398 to alanine 415 and glutamine 513 to serine 522. Residues aspartate 523 to glutamate 532 show a composition bias toward acidic residues. Phosphoserine is present on residues serine 537 and serine 540. Positions methionine 603–serine 695 are disordered. Low complexity predominate over residues alanine 652–serine 695. 2 C2H2-type zinc fingers span residues tyrosine 705–histidine 727 and phenylalanine 733–histidine 757.

The protein belongs to the hunchback C2H2-type zinc-finger protein family. In embryo, expression of maternal transcript is highest in anterior region. Zygotic transcript is expressed in anterior region until the beginning of gastrulation and in posterior region until early gastrulation. After this, it is expressed in developing nervous system.

It localises to the nucleus. In terms of biological role, gap class segmentation protein that controls development of head structures. The chain is Protein hunchback from Drosophila melanogaster (Fruit fly).